Here is a 392-residue protein sequence, read N- to C-terminus: Chaperone protein DnaJ (392 aa).

Residues 2–67 (DYYTILGVAK…QKRESYDRYG (66 aa)) form the J domain. The segment at 149 to 227 (GVEKELLVSG…CRGQGRIKDK (79 aa)) adopts a CR-type zinc-finger fold. Zn(2+) contacts are provided by Cys162, Cys165, Cys179, Cys182, Cys201, Cys204, Cys215, and Cys218. CXXCXGXG motif repeat units follow at residues 162–169 (CDACSGSG), 179–186 (CDRCKGSG), 201–208 (CPDCSGEG), and 215–222 (CSVCRGQG).

It belongs to the DnaJ family. In terms of assembly, homodimer. Zn(2+) is required as a cofactor.

The protein localises to the cytoplasm. Participates actively in the response to hyperosmotic and heat shock by preventing the aggregation of stress-denatured proteins and by disaggregating proteins, also in an autonomous, DnaK-independent fashion. Unfolded proteins bind initially to DnaJ; upon interaction with the DnaJ-bound protein, DnaK hydrolyzes its bound ATP, resulting in the formation of a stable complex. GrpE releases ADP from DnaK; ATP binding to DnaK triggers the release of the substrate protein, thus completing the reaction cycle. Several rounds of ATP-dependent interactions between DnaJ, DnaK and GrpE are required for fully efficient folding. Also involved, together with DnaK and GrpE, in the DNA replication of plasmids through activation of initiation proteins. The polypeptide is Chaperone protein DnaJ (Chlamydia trachomatis serovar L2 (strain ATCC VR-902B / DSM 19102 / 434/Bu)).